Consider the following 150-residue polypeptide: Cyclin-dependent kinases regulatory subunit (150 aa).

Residues 115–137 show a composition bias toward low complexity; it reads AAAQQQQQQQQQQQQQQQQHQTQ. Positions 115 to 150 are disordered; sequence AAAQQQQQQQQQQQQQQQQHQTQSISNDMQVPPQIS.

The protein belongs to the CKS family. As to quaternary structure, forms a stable but non-covalent complex with the CDC28 protein and with a cyclin.

Binds to the catalytic subunit of the cyclin dependent kinase (CDC28) and is essential for its biological function. In Saccharomyces cerevisiae (strain ATCC 204508 / S288c) (Baker's yeast), this protein is Cyclin-dependent kinases regulatory subunit.